The sequence spans 134 residues: Small ribosomal subunit protein bS6 (134 aa).

The segment at 99–134 (EPSAMMQKRDRDERKDRERGRRRDEDGFSGDRNEEN) is disordered. Over residues 105 to 134 (QKRDRDERKDRERGRRRDEDGFSGDRNEEN) the composition is skewed to basic and acidic residues.

This sequence belongs to the bacterial ribosomal protein bS6 family.

Binds together with bS18 to 16S ribosomal RNA. This Methylobacterium nodulans (strain LMG 21967 / CNCM I-2342 / ORS 2060) protein is Small ribosomal subunit protein bS6.